The following is a 599-amino-acid chain: Elongation factor 4 (599 aa).

Residues 2–184 enclose the tr-type G domain; it reads KNIRNFSIIA…RLVRDIPPPQ (183 aa). GTP-binding positions include 14–19 and 131–134; these read DHGKST and NKID.

The protein belongs to the TRAFAC class translation factor GTPase superfamily. Classic translation factor GTPase family. LepA subfamily.

It localises to the cell inner membrane. The enzyme catalyses GTP + H2O = GDP + phosphate + H(+). Functionally, required for accurate and efficient protein synthesis under certain stress conditions. May act as a fidelity factor of the translation reaction, by catalyzing a one-codon backward translocation of tRNAs on improperly translocated ribosomes. Back-translocation proceeds from a post-translocation (POST) complex to a pre-translocation (PRE) complex, thus giving elongation factor G a second chance to translocate the tRNAs correctly. Binds to ribosomes in a GTP-dependent manner. This Salmonella agona (strain SL483) protein is Elongation factor 4.